Reading from the N-terminus, the 240-residue chain is Urease accessory protein UreF (240 aa).

It belongs to the UreF family. In terms of assembly, ureD, UreF and UreG form a complex that acts as a GTP-hydrolysis-dependent molecular chaperone, activating the urease apoprotein by helping to assemble the nickel containing metallocenter of UreC. The UreE protein probably delivers the nickel.

It localises to the cytoplasm. Its function is as follows. Required for maturation of urease via the functional incorporation of the urease nickel metallocenter. The sequence is that of Urease accessory protein UreF from Bradyrhizobium sp. (strain ORS 278).